The primary structure comprises 676 residues: DNA ligase (676 aa).

Residues 39–43 (DYVYD), 88–91 (SLND), and Glu-118 each bind NAD(+). Lys-120 (N6-AMP-lysine intermediate) is an active-site residue. Arg-141, Glu-175, Lys-291, and Lys-315 together coordinate NAD(+). 4 residues coordinate Zn(2+): Cys-409, Cys-412, Cys-427, and Cys-432. The region spanning 595–676 (EVESPFKDKT…MVDALDASHF (82 aa)) is the BRCT domain.

Belongs to the NAD-dependent DNA ligase family. LigA subfamily. Mg(2+) is required as a cofactor. It depends on Mn(2+) as a cofactor.

It carries out the reaction NAD(+) + (deoxyribonucleotide)n-3'-hydroxyl + 5'-phospho-(deoxyribonucleotide)m = (deoxyribonucleotide)n+m + AMP + beta-nicotinamide D-nucleotide.. DNA ligase that catalyzes the formation of phosphodiester linkages between 5'-phosphoryl and 3'-hydroxyl groups in double-stranded DNA using NAD as a coenzyme and as the energy source for the reaction. It is essential for DNA replication and repair of damaged DNA. The sequence is that of DNA ligase from Enterococcus faecalis (strain ATCC 700802 / V583).